The chain runs to 271 residues: Fork head domain-containing protein FD5 (271 aa).

The segment at residues 12–103 (QKPPYSYISL…FDMFENGSLL (92 aa)) is a DNA-binding region (fork-head).

As to expression, expressed in early embryogenesis in 14 symmetrical pairs of segmentally arranged neuroblasts and in developing peripheral nervous system. Also, later in embryogenesis, in a cluster of cells in head region.

Its subcellular location is the nucleus. Functionally, involved in development during embryogenesis. The polypeptide is Fork head domain-containing protein FD5 (fd96Cb) (Drosophila melanogaster (Fruit fly)).